The primary structure comprises 256 residues: Enoyl-[acyl-carrier-protein] reductase [NADPH] FabI (256 aa).

NADP(+)-binding positions include Gly13, 19–20, 40–44, 66–67, and Ile94; these read SI, RKERS, and DV. Residue Ala97 coordinates substrate. Residues Tyr147 and Tyr157 each act as proton acceptor in the active site. Residues Lys164 and 193–197 each bind NADP(+); that span reads IRTLS.

It belongs to the short-chain dehydrogenases/reductases (SDR) family. FabI subfamily. In terms of assembly, homotetramer.

The enzyme catalyses a 2,3-saturated acyl-[ACP] + NADP(+) = a (2E)-enoyl-[ACP] + NADPH + H(+). It participates in lipid metabolism; fatty acid biosynthesis. In terms of biological role, catalyzes the reduction of a carbon-carbon double bond in an enoyl moiety that is covalently linked to an acyl carrier protein (ACP). Involved in the elongation cycle of fatty acid which are used in the lipid metabolism. The polypeptide is Enoyl-[acyl-carrier-protein] reductase [NADPH] FabI (fabI) (Staphylococcus aureus (strain MRSA252)).